We begin with the raw amino-acid sequence, 922 residues long: ATP-dependent helicase fft3 (922 aa).

2 disordered regions span residues 139-177 and 198-224; these read EPKM…APHR and PLSS…DDSN. The segment covering 153-166 has biased composition (low complexity); sequence DSLPLSLSSQSLSS. Positions 207 to 223 are enriched in acidic residues; that stretch reads PEADDDSNDDMYSDDDS. Phosphoserine is present on residues Ser-213 and Ser-219. In terms of domain architecture, Helicase ATP-binding spans 399-567; sequence YLLYELKLAG…ISLLAFILPH (169 aa). 412–419 contacts ATP; it reads DEMGLGKT. The short motif at 518-521 is the DEGH box element; that stretch reads DEGH. A Phosphoserine modification is found at Ser-617. Positions 765-922 constitute a Helicase C-terminal domain; it reads KLKKLLTNAV…ETVEAEDDDD (158 aa).

Belongs to the SNF2/RAD54 helicase family. As to quaternary structure, interacts with the GDP-bound form of spi1.

It localises to the nucleus. Its subcellular location is the chromosome. It catalyses the reaction ATP + H2O = ADP + phosphate + H(+). In terms of biological role, DNA helicase that possesses intrinsic ATP-dependent nucleosome-remodeling activity and is required for heterochromatin organization. Required for maintaining a heterochromatin chromatin structure at centromeres and subtelomeres by protecting these regions from euchromatin assembly. Enhances the nucleotide exchange activity of the pim1 guanine nucleotide exchange factor and abolishes histone-H3-mediated RanGAP inhibition. Involved in the construction of the centromeres. The sequence is that of ATP-dependent helicase fft3 (fft3) from Schizosaccharomyces pombe (strain 972 / ATCC 24843) (Fission yeast).